The primary structure comprises 372 residues: Envelope phospholipase OPG057 (372 aa).

Positions 153–156 (YPPL) match the YPPL motif. S-palmitoyl cysteine; by host attachment occurs at residues Cys185 and Cys186. Positions 307 to 334 (FTIQNNTKLLIVDDEYVHITSANFDGTH) constitute a PLD phosphodiesterase domain.

It belongs to the orthopoxvirus OPG057 family. As to quaternary structure, interacts with protein OPG190. Post-translationally, palmitoylated. Attachment of the palmitate moiety is essential for correct intracellular targeting and protein function.

The protein localises to the virion membrane. It localises to the host Golgi apparatus. The protein resides in the host trans-Golgi network. Its subcellular location is the host endoplasmic reticulum membrane. The catalysed reaction is a 1,2-diacyl-sn-glycero-3-phosphocholine + H2O = a 1,2-diacyl-sn-glycero-3-phosphate + choline + H(+). In terms of biological role, major envelope protein that plays a role in the biogenesis of the viral double membrane and in egress of virus from the host cell. Produces the wrapped form of virus that is required for cell-to-cell spread. Acts as a lipase with broad specificity including phospholipase C, phospholipase A, and triacylglycerol lipase activities. The polypeptide is Envelope phospholipase OPG057 (OPG057) (Cynomys gunnisoni (Gunnison's prairie dog)).